The sequence spans 122 residues: Large ribosomal subunit protein uL14 (122 aa).

The protein belongs to the universal ribosomal protein uL14 family. In terms of assembly, part of the 50S ribosomal subunit. Forms a cluster with proteins L3 and L19. In the 70S ribosome, L14 and L19 interact and together make contacts with the 16S rRNA in bridges B5 and B8.

Its function is as follows. Binds to 23S rRNA. Forms part of two intersubunit bridges in the 70S ribosome. The chain is Large ribosomal subunit protein uL14 from Petrotoga mobilis (strain DSM 10674 / SJ95).